The following is a 423-amino-acid chain: Serine--tRNA ligase (423 aa).

231–233 contacts L-serine; sequence TAE. 262 to 264 contributes to the ATP binding site; the sequence is RSE. Glu285 contacts L-serine. 349–352 lines the ATP pocket; sequence EIGS. Ser385 is an L-serine binding site.

Belongs to the class-II aminoacyl-tRNA synthetase family. Type-1 seryl-tRNA synthetase subfamily. As to quaternary structure, homodimer. The tRNA molecule binds across the dimer.

It is found in the cytoplasm. The enzyme catalyses tRNA(Ser) + L-serine + ATP = L-seryl-tRNA(Ser) + AMP + diphosphate + H(+). It carries out the reaction tRNA(Sec) + L-serine + ATP = L-seryl-tRNA(Sec) + AMP + diphosphate + H(+). The protein operates within aminoacyl-tRNA biosynthesis; selenocysteinyl-tRNA(Sec) biosynthesis; L-seryl-tRNA(Sec) from L-serine and tRNA(Sec): step 1/1. Catalyzes the attachment of serine to tRNA(Ser). Is also able to aminoacylate tRNA(Sec) with serine, to form the misacylated tRNA L-seryl-tRNA(Sec), which will be further converted into selenocysteinyl-tRNA(Sec). This chain is Serine--tRNA ligase, found in Acholeplasma laidlawii (strain PG-8A).